The sequence spans 381 residues: Acetyl-CoA:oxalate CoA-transferase (381 aa).

His-233 is a catalytic residue.

The protein belongs to the CoA-transferase III family. Homodimer.

It catalyses the reaction oxalate + acetyl-CoA = oxalyl-CoA + acetate. In terms of biological role, involved in the catabolism of oxalate and in the adapatation to low pH. ACOCT serves to prime the oxalate-induced acid tolerance response (ATR) cycle by producing substrate for oxalyl-CoA decarboxylase (OXC) and formyl-coenzyme A transferase (FCOCT). Catalyzes the reversible conversion of acetyl-CoA and oxalate to oxalyl-CoA and acetate. It can also use formyl-CoA and oxalate to produce oxalyl-CoA and formate with significantly reduced specific activity. The protein is Acetyl-CoA:oxalate CoA-transferase (yfdE) of Escherichia coli (strain K12).